The chain runs to 611 residues: Rho GTPase-activating protein gacN (611 aa).

A Rho-GAP domain is found at 24 to 219 (KTFKKILKPG…VLIEEFHVLY (196 aa)). Residues 236–499 (IREDKRSTSE…TKLQKSSSSS (264 aa)) adopt a coiled-coil conformation. Basic and acidic residues predominate over residues 476–491 (NQLEKEKSKLQDELTK). The interval 476 to 550 (NQLEKEKSKL…TTPPPPLDED (75 aa)) is disordered. 2 stretches are compositionally biased toward low complexity: residues 495–509 (SSSSSSSSSSSSSSS) and 527–540 (TTTTTTTTSPAQQP).

The protein localises to the cytoplasm. In terms of biological role, rho GTPase-activating protein involved in the signal transduction pathway. This Dictyostelium discoideum (Social amoeba) protein is Rho GTPase-activating protein gacN (gacN).